Consider the following 283-residue polypeptide: Pantothenate synthetase (283 aa).

Residue 30–37 coordinates ATP; sequence MGNLHDGH. His-37 serves as the catalytic Proton donor. (R)-pantoate is bound at residue Gln-61. Gln-61 contributes to the beta-alanine binding site. Residue 149-152 coordinates ATP; it reads GEKD. Gln-155 is a binding site for (R)-pantoate. 186–189 provides a ligand contact to ATP; it reads LSSR.

The protein belongs to the pantothenate synthetase family. In terms of assembly, homodimer.

Its subcellular location is the cytoplasm. The catalysed reaction is (R)-pantoate + beta-alanine + ATP = (R)-pantothenate + AMP + diphosphate + H(+). It participates in cofactor biosynthesis; (R)-pantothenate biosynthesis; (R)-pantothenate from (R)-pantoate and beta-alanine: step 1/1. Functionally, catalyzes the condensation of pantoate with beta-alanine in an ATP-dependent reaction via a pantoyl-adenylate intermediate. In Escherichia coli O157:H7, this protein is Pantothenate synthetase.